An 86-amino-acid chain; its full sequence is Maxadilan (86 aa).

The signal sequence occupies residues 1–23 (MKQILLISLVVVLAVFAFNVAEG). Disulfide bonds link C24–C28 and C37–C74.

Interacts with human ADCYAP1R1. In terms of tissue distribution, salivary gland (at protein level).

It is found in the secreted. Its function is as follows. Potent vasodilator. Activates mammalian ADCYAP1R1, a PAC1 receptor, and induces cAMP accumulation in host cells. Causes the development of erythema following superficial injection into the rabbit or human skin. Influences adaptive immune responses mediated by host dendritic cells. Reduces surface expression of CD80 on host dendritic cells stimulated with lipopolysaccharides (LPS) and induces concomitant increase in CD86 expression on a subpopulation of these cells. Redirects cytokine secretion by LPS-activated host dendritic cells toward type 2 responses: decreases secretion of TNF-alpha/TNF, IL-12p40/IL12B and IFN-gamma/IFNG, and increases secretion of IL6 and IL10. Reduces ability of host bone marrow-derived dendritic cells to stimulate proliferation of CD4(+) T-cells. Reprograms the effect of LPS-activated host dendritic cells on cytokine secretion profiles in host T-cells: decreases secretion of TNF-alpha/TNF and IFN-gamma/IFNG, increases secretion of IL6 and IL13, and increases secretion of pro-inflammatory cytokine IL-1beta/IL1B in mixed lymphocyte reaction (MLR) cultures. Reduces LPS-induced up-regulation of CCR7 in activated host dendritic cells. Inhibits IFN-gamma/IFNG and IL-12p40/IL12B production by human peripheral blood mononuclear cells. Increases IL6 and decreases TNF-alpha/TNF production by LPS-stimulated human monocytes. In terms of biological role, (Microbial infection) Probably plays a critical role in the enhancement of Leishmania infectivity in the host attributed to sand fly saliva. In Lutzomyia longipalpis (Sand fly), this protein is Maxadilan.